The following is a 92-amino-acid chain: Small ribosomal subunit protein bS20 (92 aa).

The interval 1–23 is disordered; sequence MANSPSAKKRAKQAEKRRSHNAS. Residues 7–20 are compositionally biased toward basic residues; it reads AKKRAKQAEKRRSH.

It belongs to the bacterial ribosomal protein bS20 family.

In terms of biological role, binds directly to 16S ribosomal RNA. This chain is Small ribosomal subunit protein bS20, found in Pseudomonas fluorescens (strain ATCC BAA-477 / NRRL B-23932 / Pf-5).